The chain runs to 125 residues: Protein Turandot F (125 aa).

Positions 1–19 (MKTVILFGFLLALLGYLEA) are cleaved as a signal peptide.

This sequence belongs to the Turandot family.

It is found in the secreted. Functionally, a humoral factor that may play a role in stress tolerance. This Drosophila melanogaster (Fruit fly) protein is Protein Turandot F.